A 447-amino-acid polypeptide reads, in one-letter code: Tubulin alpha-1 chain (447 aa).

GTP-binding residues include Q11, E72, S141, G145, T146, T180, N207, and N229. E72 is a binding site for Mg(2+). E255 is an active-site residue.

It belongs to the tubulin family. As to quaternary structure, dimer of alpha and beta chains. A typical microtubule is a hollow water-filled tube with an outer diameter of 25 nm and an inner diameter of 15 nM. Alpha-beta heterodimers associate head-to-tail to form protofilaments running lengthwise along the microtubule wall with the beta-tubulin subunit facing the microtubule plus end conferring a structural polarity. Microtubules usually have 13 protofilaments but different protofilament numbers can be found in some organisms and specialized cells. Mg(2+) serves as cofactor.

Its subcellular location is the cytoplasm. It localises to the cytoskeleton. It catalyses the reaction GTP + H2O = GDP + phosphate + H(+). Its function is as follows. Tubulin is the major constituent of microtubules, a cylinder consisting of laterally associated linear protofilaments composed of alpha- and beta-tubulin heterodimers. Microtubules grow by the addition of GTP-tubulin dimers to the microtubule end, where a stabilizing cap forms. Below the cap, tubulin dimers are in GDP-bound state, owing to GTPase activity of alpha-tubulin. This is Tubulin alpha-1 chain (TUB1) from Saccharomyces cerevisiae (strain ATCC 204508 / S288c) (Baker's yeast).